The following is a 60-amino-acid chain: Homeobox protein engrailed-like B (60 aa).

Positions 1–41 (VEQLQRLKSEFGASRYLTEARRQALAQELRLNEAQIKIWFQ) form a DNA-binding region, homeobox.

Belongs to the engrailed homeobox family.

The protein localises to the nucleus. The sequence is that of Homeobox protein engrailed-like B from Myxine glutinosa (Atlantic hagfish).